The chain runs to 985 residues: Ankyrin repeat domain-containing protein 24 (985 aa).

ANK repeat units lie at residues 52–81 (EGKS…DVMS), 85–114 (AGYN…VVDI), 118–147 (SGWT…HMNP), 151–180 (SGAT…ATND), and 184–213 (QGRT…QLSI). 5 disordered regions span residues 243 to 293 (RSSP…DRDA), 311 to 360 (IRGL…LGRE), 386 to 412 (QDEE…SAEE), 476 to 503 (YTEA…TAYQ), and 594 to 614 (DNAE…NPGM). The stretch at 291 to 488 (RDAYEEIVRL…AMHSQQQQQE (198 aa)) forms a coiled coil. 2 stretches are compositionally biased toward basic and acidic residues: residues 311 to 326 (IRGL…KEPL) and 349 to 360 (EKQEEKESLGRE).

In terms of assembly, homodimer. Interacts (via C-terminal domain) with TRIOBP (via C-terminal domain) isoform 4; recruits TRIOBP isoform 4 to stereocilia rootlets. As to expression, expressed in vestibular hair bundles.

The protein resides in the cell membrane. It localises to the cell projection. Its subcellular location is the stereocilium. In terms of biological role, component of the stereocilia rootlet in hair cells of inner ear. Bridges the apical plasma membrane with the lower rootlet and maintains normal distribution of TRIOBP, thereby reinforcing stereocilia insertion points and organizing rootlets for hearing with long-term resilience. The sequence is that of Ankyrin repeat domain-containing protein 24 (Ankrd24) from Mus musculus (Mouse).